The following is a 560-amino-acid chain: Nuclear hormone receptor family member nhr-8 (560 aa).

The segment at 1–21 is disordered; that stretch reads MPSSSPSMDESRRSAVPPKEP. The segment at residues 23–98 is a DNA-binding region (nuclear receptor); the sequence is GRICTVCSDR…VGMNSEWLND (76 aa). NR C4-type zinc fingers lie at residues 26-46 and 62-86; these read CTVC…CESC and CPFS…LNKC. Residues 336 to 560 enclose the NR LBD domain; the sequence is DEITLLEELH…PLIRELCSFE (225 aa).

Belongs to the nuclear hormone receptor family.

It is found in the nucleus. Functionally, orphan nuclear receptor. This chain is Nuclear hormone receptor family member nhr-8 (nhr-8), found in Caenorhabditis elegans.